Here is a 185-residue protein sequence, read N- to C-terminus: Elongation factor P (185 aa).

The protein belongs to the elongation factor P family.

It is found in the cytoplasm. The protein operates within protein biosynthesis; polypeptide chain elongation. Its function is as follows. Involved in peptide bond synthesis. Stimulates efficient translation and peptide-bond synthesis on native or reconstituted 70S ribosomes in vitro. Probably functions indirectly by altering the affinity of the ribosome for aminoacyl-tRNA, thus increasing their reactivity as acceptors for peptidyl transferase. This chain is Elongation factor P, found in Burkholderia ambifaria (strain MC40-6).